The following is a 468-amino-acid chain: SVGFKAGVKEYKLTYYTPEYQTKDTDILAAFRVTPQPGVPPEEAGAAVAAESSTGTWTTVWTDGLTSLDRYKGRCYRIERVVGEKDQYIAYVAYPLDLFEEGSVTNMFTSIVGNVFGFKALRALRLEDLRIPPAYIKTFQGPPHGIQVERDKLNKYGRPLLGCTIKPKLGLSAKNYGRAVYECLRGGLDFTKDDENVNSQPFMRWRDRFLFCAEALYKAQAETGEIKGHYLNATAGTCEEMIKRAVFARELGVPIVMHDYLTGGFTANTSLAHYCRDNGLLLHIHRAMHAVIDRQKNHGMHFRVLAKALRMSGGDHIHAGTVVGKLEGERDITLGFVDLLRDDFVEQDRSRGIYFTQDWVSLPGVLPVASGGIHVWHMPALTEIFGDDSVLQFGGGTLGHPWGNAPGAVANRVALEACVKARNEGRDLAQEGNEIIREACKWSPELAAACEVWKEIVFNFAAVDVLDK.

Lys5 is modified (N6,N6,N6-trimethyllysine). Substrate contacts are provided by Asn114 and Thr164. Lys166 serves as the catalytic Proton acceptor. Position 168 (Lys168) interacts with substrate. Positions 192, 194, and 195 each coordinate Mg(2+). N6-carboxylysine is present on Lys192. His285 functions as the Proton acceptor in the catalytic mechanism. Residues Arg286, His318, and Ser370 each contribute to the substrate site.

Belongs to the RuBisCO large chain family. Type I subfamily. As to quaternary structure, heterohexadecamer of 8 large chains and 8 small chains; disulfide-linked. The disulfide link is formed within the large subunit homodimers. Requires Mg(2+) as cofactor. Post-translationally, the disulfide bond which can form in the large chain dimeric partners within the hexadecamer appears to be associated with oxidative stress and protein turnover.

Its subcellular location is the plastid. It localises to the chloroplast. It catalyses the reaction 2 (2R)-3-phosphoglycerate + 2 H(+) = D-ribulose 1,5-bisphosphate + CO2 + H2O. It carries out the reaction D-ribulose 1,5-bisphosphate + O2 = 2-phosphoglycolate + (2R)-3-phosphoglycerate + 2 H(+). Functionally, ruBisCO catalyzes two reactions: the carboxylation of D-ribulose 1,5-bisphosphate, the primary event in carbon dioxide fixation, as well as the oxidative fragmentation of the pentose substrate in the photorespiration process. Both reactions occur simultaneously and in competition at the same active site. The chain is Ribulose bisphosphate carboxylase large chain from Solandra grandiflora (Chalice vine).